The following is an 874-amino-acid chain: Alanine--tRNA ligase (874 aa).

Positions 562, 566, 664, and 668 each coordinate Zn(2+).

It belongs to the class-II aminoacyl-tRNA synthetase family. Zn(2+) is required as a cofactor.

The protein localises to the cytoplasm. The enzyme catalyses tRNA(Ala) + L-alanine + ATP = L-alanyl-tRNA(Ala) + AMP + diphosphate. Functionally, catalyzes the attachment of alanine to tRNA(Ala) in a two-step reaction: alanine is first activated by ATP to form Ala-AMP and then transferred to the acceptor end of tRNA(Ala). Also edits incorrectly charged Ser-tRNA(Ala) and Gly-tRNA(Ala) via its editing domain. The protein is Alanine--tRNA ligase of Neisseria meningitidis serogroup C / serotype 2a (strain ATCC 700532 / DSM 15464 / FAM18).